The primary structure comprises 137 residues: Small ribosomal subunit protein uS12 (137 aa).

Position 89 is a 3-methylthioaspartic acid (Asp89). The tract at residues 101–137 is disordered; that stretch reads SLDTSGVADRKQSRSKYGAKQPKAGAPAAPVKGKGKK. The span at 116–137 shows a compositional bias: low complexity; the sequence is KYGAKQPKAGAPAAPVKGKGKK.

Belongs to the universal ribosomal protein uS12 family. As to quaternary structure, part of the 30S ribosomal subunit. Contacts proteins S8 and S17. May interact with IF1 in the 30S initiation complex.

With S4 and S5 plays an important role in translational accuracy. In terms of biological role, interacts with and stabilizes bases of the 16S rRNA that are involved in tRNA selection in the A site and with the mRNA backbone. Located at the interface of the 30S and 50S subunits, it traverses the body of the 30S subunit contacting proteins on the other side and probably holding the rRNA structure together. The combined cluster of proteins S8, S12 and S17 appears to hold together the shoulder and platform of the 30S subunit. In Chlorobium chlorochromatii (strain CaD3), this protein is Small ribosomal subunit protein uS12.